We begin with the raw amino-acid sequence, 126 residues long: Large ribosomal subunit protein mL55 (126 aa).

The N-terminal 34 residues, 1–34 (MSAKGSLLRLLWQCGMTRAAPESCRYLYTSSWRA), are a transit peptide targeting the mitochondrion. S86 is subject to Phosphoserine.

This sequence belongs to the mitochondrion-specific ribosomal protein mL55 family. As to quaternary structure, component of the mitochondrial ribosome large subunit (39S) which comprises a 16S rRNA and about 50 distinct proteins.

Its subcellular location is the mitochondrion. This Bos taurus (Bovine) protein is Large ribosomal subunit protein mL55 (MRPL55).